Consider the following 175-residue polypeptide: uncharacterized protein (175 aa).

Its subcellular location is the cytoplasm. It localises to the nucleus. This is an uncharacterized protein from Schizosaccharomyces pombe (strain 972 / ATCC 24843) (Fission yeast).